A 288-amino-acid chain; its full sequence is Ice-binding protein (288 aa).

Positions 1–22 (MFSTTLINTFSLGLLAVVSVVA) are cleaved as a signal peptide. 2 consecutive short sequence motifs (ice-binding site motif (T-A/G-X-T/N)) follow at residues 75-78 (TAGN) and 154-157 (TAFN). A glycan (N-linked (GlcNAc...) asparagine) is linked at asparagine 194. 2 short sequence motifs (ice-binding site motif (T-A/G-X-T/N)) span residues 196 to 199 (TGVT) and 265 to 268 (TGAT).

The protein belongs to the ice-binding protein family.

It localises to the secreted. Its function is as follows. Binds ice crystals and most probably inhibits their growth in order to prevent cell damage from extracellular ice. The sequence is that of Ice-binding protein from Lentinula edodes (Shiitake mushroom).